We begin with the raw amino-acid sequence, 624 residues long: MSKVIGIDLGTTNSAVAVLEGKEPKIITNPEGNRTTPSVVAFKNGEIQVGEVAKRQAITNPNTIVSIKSHMGEEGYKVKVGDKEYTPQEISAFILQYIKKFSEDYLGEKVTDAVITVPAYFNDAQRQATKDAGKIAGLNVQRIINEPTASALAYGLDKDENDEKVLVYDLGGGTFDVSILQLGDGVFQVLSTNGDTHLGGDDFDQRIMDWLIQNFKEENGVDLSNDKMALQRLKDAAEKAKKDLSGVSSTHISLPFISAGEAGPLHLEADLTRAKFDELTDDLVQKTKVAFDNALSDAGLTVNDIDKVILNGGSTRIPAVQKAVKDWAGKEPDHSINPDEAVALGAAIQGGVISGDVKDIVLLDVTPLSLGIETMGGVFTKLIDRNTTIPTSKSQIFSTAADNQPAVDVHVLQGERPMAADDKTLGRFELTDIPPAPRGVPQIQVTFDIDKNGIVNVSAKDMGTGKEQKITIKSSSGLSDEEIKKMQKDAEEHAEEDKKRKEEVDLRNEVDQLIFTTEKTLKETEGKVPETETKNVQDALDALKKAQKDNNLDEMKEKKEALSKAAQDLAVKLYQQNGGAQGAAGQAGPQGPQNGGQPNNDNGSDNGQGGSTVDGDFHKVDPDK.

At Thr174 the chain carries Phosphothreonine; by autocatalysis. Disordered stretches follow at residues 470–504 and 577–624; these read ITIK…KEEV and NGGA…DPDK. Over residues 481-504 the composition is skewed to basic and acidic residues; that stretch reads EEIKKMQKDAEEHAEEDKKRKEEV. The segment covering 577-605 has biased composition (low complexity); it reads NGGAQGAAGQAGPQGPQNGGQPNNDNGSD. The segment covering 615 to 624 has biased composition (basic and acidic residues); it reads GDFHKVDPDK.

It belongs to the heat shock protein 70 family.

In terms of biological role, acts as a chaperone. The sequence is that of Chaperone protein DnaK from Lactobacillus johnsonii (strain CNCM I-12250 / La1 / NCC 533).